The primary structure comprises 455 residues: Putative O-acetyltransferase SAT14 (455 aa).

Belongs to the lysine N-acyltransferase MbtK family.

The protein operates within mycotoxin biosynthesis. Its function is as follows. Putative O-acetyltransferase; part of the satratoxin SC2 cluster involved in the biosynthesis of satratoxins, trichothecene mycotoxins that are associated with human food poisonings. Satratoxins are suggested to be made by products of multiple gene clusters (SC1, SC2 and SC3) that encode 21 proteins in all, including polyketide synthases, acetyltransferases, and other enzymes expected to modify the trichothecene skeleton. SC1 encodes 10 proteins, SAT1 to SAT10. The largest are SAT8, which encodes a putative polyketide synthase (PKS) with a conventional non-reducing architecture, and SAT10, a putative protein containing four ankyrin repeats and thus may be involved in protein scaffolding. The putative short-chain reductase SAT3 may assist the PKS in some capacity. SAT6 contains a secretory lipase domain and acts probably as a trichothecene esterase. SAT5 encodes a putative acetyltransferase, and so, with SAT6, may affect endogenous protection from toxicity. The probable transcription factor SAT9 may regulate the expression of the SC1 cluster. SC2 encodes proteins SAT11 to SAT16, the largest of which encodes the putative reducing PKS SAT13. SAT11 is a cytochrome P450 monooxygenase, while SAT14 and SAT16 are probable acetyltransferases. The SC2 cluster may be regulated by the transcription factor SAT15. SC3 is a small cluster that encodes 5 proteins, SAT17 to SAT21. SAT21 is a putative MFS-type transporter which may have a role in exporting secondary metabolites. The four other proteins putatively encoded in SC3 include the taurine hydroxylase-like protein SAT17, the O-methyltransferase SAT18, the acetyltransferase SAT19, and the Cys6-type zinc finger SAT20, the latter being probably involved in regulation of SC3 expression. The sequence is that of Putative O-acetyltransferase SAT14 from Stachybotrys chartarum (strain CBS 109288 / IBT 7711) (Toxic black mold).